Consider the following 90-residue polypeptide: UPF0297 protein OEOE_1166 (90 aa).

The protein belongs to the UPF0297 family.

The protein is UPF0297 protein OEOE_1166 of Oenococcus oeni (strain ATCC BAA-331 / PSU-1).